Reading from the N-terminus, the 932-residue chain is UPF0182 protein Dred_1797 (932 aa).

Helical transmembrane passes span 11–31 (LVILAGALLFSLIGWGAGLYI), 53–73 (IGLRVLVGIIMFLLLLINLML), 118–138 (LTLAFTLLSMALGFLYSSSVA), 180–200 (ILASAIFLNIVLVALVYLVTD), 209–229 (IFRFPSARYHLSVLAALFFVI), 264–284 (YKALMILSLVTAIIIIANIFL), and 292–312 (YAIGGLLVTSILLGSVYPAII). The tract at residues 861 to 883 (DRPQQGVPPATDQPAGQQPAPEK) is disordered.

This sequence belongs to the UPF0182 family.

The protein resides in the cell membrane. This is UPF0182 protein Dred_1797 from Desulforamulus reducens (strain ATCC BAA-1160 / DSM 100696 / MI-1) (Desulfotomaculum reducens).